Consider the following 292-residue polypeptide: Probable 2-(5''-triphosphoribosyl)-3'-dephosphocoenzyme-A synthase (292 aa).

The protein belongs to the CitG/MdcB family.

It catalyses the reaction 3'-dephospho-CoA + ATP = 2'-(5''-triphospho-alpha-D-ribosyl)-3'-dephospho-CoA + adenine. In Shigella flexneri serotype 5b (strain 8401), this protein is Probable 2-(5''-triphosphoribosyl)-3'-dephosphocoenzyme-A synthase.